The following is a 73-amino-acid chain: Small ribosomal subunit protein bS18 (73 aa).

This sequence belongs to the bacterial ribosomal protein bS18 family. As to quaternary structure, part of the 30S ribosomal subunit. Forms a tight heterodimer with protein bS6.

In terms of biological role, binds as a heterodimer with protein bS6 to the central domain of the 16S rRNA, where it helps stabilize the platform of the 30S subunit. This Neorickettsia sennetsu (strain ATCC VR-367 / Miyayama) (Ehrlichia sennetsu) protein is Small ribosomal subunit protein bS18.